A 247-amino-acid polypeptide reads, in one-letter code: Adenosylcobinamide-GDP ribazoletransferase (247 aa).

6 consecutive transmembrane segments (helical) span residues 34–54 (IVMF…IFIL), 59–79 (CGIP…TGGF), 113–133 (GGLA…ELAL), 138–158 (MLAA…LLMY), 171–193 (VFIG…IIAT), and 197–219 (PGMQ…GQLL).

This sequence belongs to the CobS family. It depends on Mg(2+) as a cofactor.

It localises to the cell inner membrane. The catalysed reaction is alpha-ribazole + adenosylcob(III)inamide-GDP = adenosylcob(III)alamin + GMP + H(+). It catalyses the reaction alpha-ribazole 5'-phosphate + adenosylcob(III)inamide-GDP = adenosylcob(III)alamin 5'-phosphate + GMP + H(+). The protein operates within cofactor biosynthesis; adenosylcobalamin biosynthesis; adenosylcobalamin from cob(II)yrinate a,c-diamide: step 7/7. Joins adenosylcobinamide-GDP and alpha-ribazole to generate adenosylcobalamin (Ado-cobalamin). Also synthesizes adenosylcobalamin 5'-phosphate from adenosylcobinamide-GDP and alpha-ribazole 5'-phosphate. The polypeptide is Adenosylcobinamide-GDP ribazoletransferase (Salmonella newport (strain SL254)).